The sequence spans 589 residues: MAESGESGGPPGSQDSAAGAEGAGAPAAAASAEPKIMKVTVKTPKEKEEFAVPENSSVQQFKEEISKRFKSHTDQLVLIFAGKILKDQDTLSQHGIHDGLTVHLVIKTQNRPQDHSAQQTNTAGSNVTTSSTPNSNSTSGSATSNPFGLGGLGGLAGLSSLGLNTTNFSELQSQMQRQLLSNPEMMVQIMENPFVQSMLSNPDLMRQLIMANPQMQQLIQRNPEISHMLNNPDIMRQTLELARNPAMMQEMMRNQDRALSNLESIPGGYNALRRMYTDIQEPMLSAAQEQFGGNPFASLVSNTSSGEGSQPSRTENRDPLPNPWAPQTSQSSSASSGTASTVGGTTGSTASGTSGQSTTAPNLVPGVGASMFNTPGMQSLLQQITENPQLMQNMLSAPYMRSMMQSLSQNPDLAAQMMLNNPLFAGNPQLQEQMRQQLPTFLQQMQNPDTLSAMSNPRAMQALLQIQQGLQTLATEAPGLIPGFTPGLGALGSTGGSSGTNGSNATPSENTSPTAGTTEPGHQQFIQQMLQALAGVNPQLQNPEVRFQQQLEQLSAMGFLNREANLQALIATGGDINAAIERLLGSQPS.

Over residues 1–11 (MAESGESGGPP) the composition is skewed to gly residues. Disordered stretches follow at residues 1-35 (MAES…AEPK) and 110-145 (NRPQ…ATSN). An N-acetylalanine modification is found at Ala-2. The segment covering 12 to 35 (GSQDSAAGAEGAGAPAAAASAEPK) has biased composition (low complexity). The Ubiquitin-like domain occupies 37 to 111 (MKVTVKTPKE…VHLVIKTQNR (75 aa)). A compositionally biased stretch (polar residues) spans 110 to 124 (NRPQDHSAQQTNTAG). The segment covering 125 to 145 (SNVTTSSTPNSNSTSGSATSN) has biased composition (low complexity). Positions 178-428 (QLLSNPEMMV…LNNPLFAGNP (251 aa)) are interaction with UBXN4. STI1 domains follow at residues 182 to 210 (NPEM…QLIM) and 212 to 251 (NPQM…MQEM). Residues 295 to 371 (PFASLVSNTS…NLVPGVGASM (77 aa)) form a disordered region. Polar residues predominate over residues 299-313 (LVSNTSSGEGSQPSR). The span at 327-360 (QTSQSSSASSGTASTVGGTTGSTASGTSGQSTTA) shows a compositional bias: low complexity. 2 consecutive STI1 domains span residues 387 to 434 (NPQL…QEQM) and 438 to 470 (LPTF…QQGL). The disordered stretch occupies residues 488–520 (LGALGSTGGSSGTNGSNATPSENTSPTAGTTEP). A compositionally biased stretch (gly residues) spans 489–499 (GALGSTGGSSG). Residues 509–520 (ENTSPTAGTTEP) show a composition bias toward polar residues. The region spanning 546–586 (RFQQQLEQLSAMGFLNREANLQALIATGGDINAAIERLLGS) is the UBA domain.

Monomer and homodimer. Heterodimer with UBQLN2. Binds CD47, NBL1, GABRA1, GABRA2, GABRA3, GABRA6, GABRB1, GABRB2 and GABRB3. Binds UBE3A, BTRC, P4HB and MTOR. Interacts with the proteasome 19S subunit. Interacts (via ubiquitin-like domain) with TREX1; the interaction is direct and may control TREX1 subcellular location. Forms a complex with UBXN4 and VCP. Interacts (via UBA domain) with UBQLN4 (via ubiquitin-like domain). Found in a complex with UBQLN2 and MAP1LC3A/B/C. The monomeric form interacts with PSEN2. The monomeric form interacts with PSEN1. Interacts with ORAI1. Interacts (via UBA domain) with TICAM1. Interacts with EPS15. Interacts (via UBA domain) with UBA52 and (via ubiquitin-like domain) with PSMD3 and PSMD4. Interacts with HERPUD1. Interacts with MAP1LC3A/B/C in the presence of UBQLN4. Interacts (via ubiquitin-like domain) with EPS15 (via UIM domains) and both the ubiquitinated and non-ubiquitinated forms can interact with EPS15. Interacts (via ubiquitin-like domain) with EPS15L1, HGS (via UIM domain) and STAM2 (via UIM domain). Interacts with BCL2L10/BCL-B; in the cytoplasm. As to quaternary structure, monomeric form interacts with PSEN1. Degraded during both macroautophagy and during chaperone-mediated autophagy (CMA). In terms of processing, phosphorylated. Post-translationally, ubiquitinated. As to expression, brain (at protein level). Ubiquitous. Highly expressed throughout the brain; detected in neurons and in neuropathological lesions, such as neurofibrillary tangles and Lewy bodies. Highly expressed in heart, placenta, pancreas, lung, liver, skeletal muscle and kidney.

The protein localises to the cytoplasm. Its subcellular location is the nucleus. It is found in the endoplasmic reticulum. It localises to the cytoplasmic vesicle. The protein resides in the autophagosome. The protein localises to the cell membrane. Its function is as follows. Plays an important role in the regulation of different protein degradation mechanisms and pathways including ubiquitin-proteasome system (UPS), autophagy and endoplasmic reticulum-associated protein degradation (ERAD) pathway. Mediates the proteasomal targeting of misfolded or accumulated proteins for degradation by binding (via UBA domain) to their polyubiquitin chains and by interacting (via ubiquitin-like domain) with the subunits of the proteasome. Plays a role in the ERAD pathway via its interaction with ER-localized proteins UBXN4, VCP and HERPUD1 and may form a link between the polyubiquitinated ERAD substrates and the proteasome. Involved in the regulation of macroautophagy and autophagosome formation; required for maturation of autophagy-related protein LC3 from the cytosolic form LC3-I to the membrane-bound form LC3-II and may assist in the maturation of autophagosomes to autolysosomes by mediating autophagosome-lysosome fusion. Negatively regulates the TICAM1/TRIF-dependent toll-like receptor signaling pathway by decreasing the abundance of TICAM1 via the autophagic pathway. Promotes the ubiquitination and lysosomal degradation of ORAI1, consequently down-regulating the ORAI1-mediated Ca2+ mobilization. Suppresses the maturation and proteasomal degradation of amyloid beta A4 protein (A4) by stimulating the lysine 63 (K63)-linked polyubiquitination. Delays the maturation of A4 by sequestering it in the Golgi apparatus and preventing its transport to the cell surface for subsequent processing. Ubiquitinates BCL2L10 and thereby stabilizes protein abundance. Plays a role in unfolded protein response (UPR) by attenuating the induction of UPR-inducible genes, DDTI3/CHOP, HSPA5 and PDIA2 during ER stress. Plays a key role in the regulation of the levels of PSEN1 by targeting its accumulation to aggresomes which may then be removed from cells by autophagocytosis. In terms of biological role, plays a role in unfolded protein response (UPR) by attenuating the induction of UPR-inducible genes, DDTI3/CHOP, HSPA5 and PDIA2 during ER stress. The protein is Ubiquilin-1 (UBQLN1) of Homo sapiens (Human).